Here is a 95-residue protein sequence, read N- to C-terminus: MLHTLHRSPWLTDFAALLRLLSEGDELLLLQDGVTAAVDGNRYLESLRNAPIKVYALNEDLIARGLTGQISNDIIPIDYTDFVRLTVKHSGQMAW.

Belongs to the DsrH/TusB family. Heterohexamer, formed by a dimer of trimers. The hexameric TusBCD complex contains 2 copies each of TusB, TusC and TusD. The TusBCD complex interacts with TusE.

Its subcellular location is the cytoplasm. Its function is as follows. Part of a sulfur-relay system required for 2-thiolation of 5-methylaminomethyl-2-thiouridine (mnm(5)s(2)U) at tRNA wobble positions. This chain is Protein TusB, found in Escherichia coli O157:H7.